The primary structure comprises 149 residues: D-aminoacyl-tRNA deacylase (149 aa).

The Gly-cisPro motif, important for rejection of L-amino acids motif lies at 137-138; sequence GP.

It belongs to the DTD family. Homodimer.

The protein localises to the cytoplasm. It catalyses the reaction glycyl-tRNA(Ala) + H2O = tRNA(Ala) + glycine + H(+). It carries out the reaction a D-aminoacyl-tRNA + H2O = a tRNA + a D-alpha-amino acid + H(+). In terms of biological role, an aminoacyl-tRNA editing enzyme that deacylates mischarged D-aminoacyl-tRNAs. Also deacylates mischarged glycyl-tRNA(Ala), protecting cells against glycine mischarging by AlaRS. Acts via tRNA-based rather than protein-based catalysis; rejects L-amino acids rather than detecting D-amino acids in the active site. By recycling D-aminoacyl-tRNA to D-amino acids and free tRNA molecules, this enzyme counteracts the toxicity associated with the formation of D-aminoacyl-tRNA entities in vivo and helps enforce protein L-homochirality. The sequence is that of D-aminoacyl-tRNA deacylase from Caldicellulosiruptor saccharolyticus (strain ATCC 43494 / DSM 8903 / Tp8T 6331).